The following is a 78-amino-acid chain: U7-lycotoxin-Ls1a (78 aa).

The N-terminal stretch at M1–A22 is a signal peptide. The propeptide occupies Q23–G26.

Belongs to the neurotoxin 19 (CSTX) family. 07 (U7-Lctx) subfamily. Post-translationally, contains 4 disulfide bonds. In terms of tissue distribution, expressed by the venom gland.

The protein resides in the secreted. The polypeptide is U7-lycotoxin-Ls1a (Lycosa singoriensis (Wolf spider)).